A 432-amino-acid polypeptide reads, in one-letter code: Adenylosuccinate synthetase (432 aa).

GTP contacts are provided by residues G13 to K19 and G41 to T43. Catalysis depends on D14, which acts as the Proton acceptor. Mg(2+) contacts are provided by D14 and G41. Residues D14–K17, N39–H42, T130, R144, Q225, T240, and R304 contribute to the IMP site. H42 (proton donor) is an active-site residue. Residue A300 to R306 coordinates substrate. Residues R306, K332–D334, and S415–G417 contribute to the GTP site.

The protein belongs to the adenylosuccinate synthetase family. As to quaternary structure, homodimer. Mg(2+) serves as cofactor.

It localises to the cytoplasm. The enzyme catalyses IMP + L-aspartate + GTP = N(6)-(1,2-dicarboxyethyl)-AMP + GDP + phosphate + 2 H(+). It functions in the pathway purine metabolism; AMP biosynthesis via de novo pathway; AMP from IMP: step 1/2. Plays an important role in the de novo pathway of purine nucleotide biosynthesis. Catalyzes the first committed step in the biosynthesis of AMP from IMP. This is Adenylosuccinate synthetase from Salmonella typhi.